The following is a 110-amino-acid chain: PCNA-associated factor (110 aa).

A Glycyl lysine isopeptide (Lys-Gly) (interchain with G-Cter in ubiquitin) cross-link involves residue Lys-15. The D-box motif lies at 23 to 34 (RKVLGSSTFVTN). Residue Lys-24 is modified to N6-acetyllysine; alternate. A Glycyl lysine isopeptide (Lys-Gly) (interchain with G-Cter in ubiquitin); alternate cross-link involves residue Lys-24. Ser-28 is subject to Phosphoserine. Residues 29-39 (STFVTNSSGSS) show a composition bias toward low complexity. Residues 29–110 (STFVTNSSGS…QPDHRDDENE (82 aa)) form a disordered region. The PIP-box motif lies at 61 to 71 (QKGIGEFFRLS). A Phosphoserine modification is found at Ser-71. Over residues 71-80 (SPKDSKKENQ) the composition is skewed to basic and acidic residues. The KEN box motif lies at 77 to 79 (KEN). The short motif at 84–96 (EAGSSGLGKAKRK) is the Initiation motif element.

In terms of assembly, interacts (when monoubiquitinated at Lys-15 and Lys-24) with PCNA. Interacts with isoform 2/p33ING1b of ING1. Interacts with BRCA1. Monoubiquitinated at Lys-15 and Lys-24 during normal S phase, promoting its association with PCNA. Also diubiquitinated at these 2 sites. Following DNA damage, monoubiquitin chains at Lys-15 and Lys-24 are probably extended, leading to disrupt the interaction with PCNA. Polyubiquitinated by the APC/C complex at the mitotic exit, leading to its degradation by the proteasome.

The protein localises to the nucleus. The protein resides in the cytoplasm. It is found in the perinuclear region. In terms of biological role, PCNA-binding protein that acts as a regulator of DNA repair during DNA replication. Following DNA damage, the interaction with PCNA is disrupted, facilitating the interaction between monoubiquitinated PCNA and the translesion DNA synthesis DNA polymerase eta (POLH) at stalled replisomes, facilitating the bypass of replication-fork-blocking lesions. Also acts as a regulator of centrosome number. This chain is PCNA-associated factor, found in Rattus norvegicus (Rat).